The following is a 140-amino-acid chain: Small ribosomal subunit protein uS19 (140 aa).

It belongs to the universal ribosomal protein uS19 family.

Functionally, protein S19 forms a complex with S13 that binds strongly to the 16S ribosomal RNA. The protein is Small ribosomal subunit protein uS19 (rps19) of Saccharolobus solfataricus (strain ATCC 35092 / DSM 1617 / JCM 11322 / P2) (Sulfolobus solfataricus).